A 346-amino-acid chain; its full sequence is Methylthioribose-1-phosphate isomerase 1 (346 aa).

Substrate is bound by residues 48–50 (RGA), R91, and Q196. The active-site Proton donor is the D237. 247–248 (NK) is a binding site for substrate.

This sequence belongs to the eIF-2B alpha/beta/delta subunits family. MtnA subfamily.

It carries out the reaction 5-(methylsulfanyl)-alpha-D-ribose 1-phosphate = 5-(methylsulfanyl)-D-ribulose 1-phosphate. Its pathway is amino-acid biosynthesis; L-methionine biosynthesis via salvage pathway; L-methionine from S-methyl-5-thio-alpha-D-ribose 1-phosphate: step 1/6. Catalyzes the interconversion of methylthioribose-1-phosphate (MTR-1-P) into methylthioribulose-1-phosphate (MTRu-1-P). This is Methylthioribose-1-phosphate isomerase 1 from Pseudothermotoga lettingae (strain ATCC BAA-301 / DSM 14385 / NBRC 107922 / TMO) (Thermotoga lettingae).